A 1065-amino-acid polypeptide reads, in one-letter code: Tubulin glycylase 3C (1065 aa).

6 disordered regions span residues 1–146 (MSSL…REDK), 158–182 (IREQKEVNLESQTEQSDHSNVTKSK), 301–326 (STQKQLVRASSAEGDKEKDDKKDIAK), 341–360 (EKKRQEIAKEEEEKKKKEQL), 381–482 (FFVD…GNGS), and 708–755 (NKQK…EKQM). Residues 23–53 (QEGNQEDLNNQNDHNLNNNELDSLSSPPSDN) show a composition bias toward low complexity. Over residues 54-63 (YNEEEFEQED) the composition is skewed to acidic residues. Over residues 73–92 (QNASQNNISQTQRISQTQLP) the composition is skewed to polar residues. Positions 122–146 (LMEKKKKEQEEKEKKELKLKKREDK) are enriched in basic and acidic residues. Over residues 166-179 (LESQTEQSDHSNVT) the composition is skewed to polar residues. The span at 313 to 326 (EGDKEKDDKKDIAK) shows a compositional bias: basic and acidic residues. Residues 385–403 (VPEKKPKKEKKKNESKEDN) are compositionally biased toward basic and acidic residues. The span at 404–423 (IQITSPKLNSTKSLSSQITR) shows a compositional bias: polar residues. A compositionally biased stretch (basic and acidic residues) spans 424-450 (KTNDAKKVEKLPKIKDSNKENHSKERN). Positions 451 to 479 (EDNEEGDDGEYECDEGDEGASDGEDEDDG) are enriched in acidic residues. Positions 633 to 1009 (YFEKDPDIEK…DYGMEKSKKA (377 aa)) constitute a TTL domain. The span at 709-721 (KQKPKKKKKKSKK) shows a compositional bias: basic residues. Over residues 722 to 733 (DKQQGDTEKKEE) the composition is skewed to basic and acidic residues. A compositionally biased stretch (acidic residues) spans 734–754 (EEGEAEDEEEDEEDEEEEEKQ). Residues 821 to 824 (QKYI), K834, and D836 each bind ATP.

It is found in the cell projection. The protein resides in the cilium. Its subcellular location is the cytoplasm. It localises to the cytoskeleton. The protein localises to the cilium axoneme. Probable glycylase which modifies tubulin, generating side chains of glycine on the gamma-carboxyl groups of specific glutamate residues within the C-terminal tail of tubulin. This is Tubulin glycylase 3C (TTLL3C) from Tetrahymena thermophila (strain SB210).